A 405-amino-acid polypeptide reads, in one-letter code: L-carnitine CoA-transferase (405 aa).

Lysine 97 and arginine 104 together coordinate CoA. Residue aspartate 169 is the Nucleophile of the active site.

Belongs to the CoA-transferase III family. CaiB subfamily. In terms of assembly, homodimer.

Its subcellular location is the cytoplasm. The enzyme catalyses crotonobetainyl-CoA + (R)-carnitine = crotonobetaine + (R)-carnitinyl-CoA. The catalysed reaction is 4-(trimethylamino)butanoyl-CoA + (R)-carnitine = (R)-carnitinyl-CoA + 4-(trimethylamino)butanoate. It participates in amine and polyamine metabolism; carnitine metabolism. Its function is as follows. Catalyzes the reversible transfer of the CoA moiety from gamma-butyrobetainyl-CoA to L-carnitine to generate L-carnitinyl-CoA and gamma-butyrobetaine. Is also able to catalyze the reversible transfer of the CoA moiety from gamma-butyrobetainyl-CoA or L-carnitinyl-CoA to crotonobetaine to generate crotonobetainyl-CoA. This chain is L-carnitine CoA-transferase, found in Shigella flexneri serotype 5b (strain 8401).